We begin with the raw amino-acid sequence, 342 residues long: S-adenosylmethionine:tRNA ribosyltransferase-isomerase (342 aa).

It belongs to the QueA family. In terms of assembly, monomer.

The protein localises to the cytoplasm. The enzyme catalyses 7-aminomethyl-7-carbaguanosine(34) in tRNA + S-adenosyl-L-methionine = epoxyqueuosine(34) in tRNA + adenine + L-methionine + 2 H(+). The protein operates within tRNA modification; tRNA-queuosine biosynthesis. Transfers and isomerizes the ribose moiety from AdoMet to the 7-aminomethyl group of 7-deazaguanine (preQ1-tRNA) to give epoxyqueuosine (oQ-tRNA). This is S-adenosylmethionine:tRNA ribosyltransferase-isomerase from Zymomonas mobilis subsp. mobilis (strain ATCC 31821 / ZM4 / CP4).